A 292-amino-acid chain; its full sequence is uncharacterized protein (292 aa).

The chain crosses the membrane as a helical span at residues 66 to 86; the sequence is LFFYLLFWWTYLTIVVLLTVP.

It is found in the host membrane. This is an uncharacterized protein from Alcelaphine herpesvirus 1 (strain C500) (AlHV-1).